Here is a 204-residue protein sequence, read N- to C-terminus: Holliday junction branch migration complex subunit RuvA (204 aa).

A domain I region spans residues 1–67 (MIAFLSGHLV…ETELVLYGFG (67 aa)). Residues 68–146 (SPAERDLFVE…HWRQGMGVAD (79 aa)) are domain II. Positions 147–157 (QPLAGGPPMPI) are flexible linker. The domain III stretch occupies residues 157–204 (IREEVEMALLALGYSTQEIQAALQALPTHPRPTEDWLRDAITYLSQQP).

This sequence belongs to the RuvA family. As to quaternary structure, homotetramer. Forms an RuvA(8)-RuvB(12)-Holliday junction (HJ) complex. HJ DNA is sandwiched between 2 RuvA tetramers; dsDNA enters through RuvA and exits via RuvB. An RuvB hexamer assembles on each DNA strand where it exits the tetramer. Each RuvB hexamer is contacted by two RuvA subunits (via domain III) on 2 adjacent RuvB subunits; this complex drives branch migration. In the full resolvosome a probable DNA-RuvA(4)-RuvB(12)-RuvC(2) complex forms which resolves the HJ.

The protein localises to the cytoplasm. The RuvA-RuvB-RuvC complex processes Holliday junction (HJ) DNA during genetic recombination and DNA repair, while the RuvA-RuvB complex plays an important role in the rescue of blocked DNA replication forks via replication fork reversal (RFR). RuvA specifically binds to HJ cruciform DNA, conferring on it an open structure. The RuvB hexamer acts as an ATP-dependent pump, pulling dsDNA into and through the RuvAB complex. HJ branch migration allows RuvC to scan DNA until it finds its consensus sequence, where it cleaves and resolves the cruciform DNA. This Synechococcus sp. (strain JA-2-3B'a(2-13)) (Cyanobacteria bacterium Yellowstone B-Prime) protein is Holliday junction branch migration complex subunit RuvA.